A 246-amino-acid chain; its full sequence is mRNA-decapping protein g5R (246 aa).

Residues 93 to 239 (QKFRKNWLLP…IIGPAFNFIK (147 aa)) form the Nudix hydrolase domain. A Nudix box motif is present at residues 128 to 149 (GKPKEDESDLTCAIREFEEETG). Glu-134 serves as a coordination point for Mg(2+). Glu-143 acts as the Nucleophile in catalysis. Mg(2+)-binding residues include Glu-147 and Asp-169.

The protein belongs to the Nudix hydrolase family. DIPP subfamily. Interacts with host RPL23A. The cofactor is Mg(2+). It depends on Mn(2+) as a cofactor.

It localises to the host rough endoplasmic reticulum. It catalyses the reaction diphospho-myo-inositol polyphosphate + H2O = myo-inositol polyphosphate + phosphate.. In terms of biological role, decapping enzyme required for the removal of the 5'-end m7GpppN cap tethered to viral and host mRNAs to allow their decay in cells. May therefore accelerate viral and cellular mRNA turnover to eliminate competing host mRNAs and allow stage-specific synthesis of viral proteins. Acceleration of the turnover of cellular transcripts may even promote the shutoff of host protein synthesis. In addition to the mRNA cap, g5R also efficiently hydrolyzes diphosphoinositol polyphosphates. Down-regulation of the level of PP-InsP5 (diphosphoinositol pentakisphosphate) may play a role in viral manipulation of the cellular secretory pathway, a step necessary for the formation of virions. Binds viral and cellular poly(A) mRNAs, thereby decreasing both types of mRNAs. The chain is mRNA-decapping protein g5R from African swine fever virus (isolate Warthog/Namibia/Wart80/1980) (ASFV).